A 153-amino-acid polypeptide reads, in one-letter code: SsrA-binding protein (153 aa).

Residues 129–153 are disordered; that stretch reads KREDMKKKDQSREMAQALREKSKSH.

The protein belongs to the SmpB family.

It is found in the cytoplasm. Required for rescue of stalled ribosomes mediated by trans-translation. Binds to transfer-messenger RNA (tmRNA), required for stable association of tmRNA with ribosomes. tmRNA and SmpB together mimic tRNA shape, replacing the anticodon stem-loop with SmpB. tmRNA is encoded by the ssrA gene; the 2 termini fold to resemble tRNA(Ala) and it encodes a 'tag peptide', a short internal open reading frame. During trans-translation Ala-aminoacylated tmRNA acts like a tRNA, entering the A-site of stalled ribosomes, displacing the stalled mRNA. The ribosome then switches to translate the ORF on the tmRNA; the nascent peptide is terminated with the 'tag peptide' encoded by the tmRNA and targeted for degradation. The ribosome is freed to recommence translation, which seems to be the essential function of trans-translation. The protein is SsrA-binding protein of Geobacter sulfurreducens (strain ATCC 51573 / DSM 12127 / PCA).